The primary structure comprises 114 residues: NADH dehydrogenase [ubiquinone] 1 subunit C2, isoform 2 (114 aa).

A helical membrane pass occupies residues 56–75 (GLHRQLLYITAFFFAGYYLV).

It belongs to the complex I NDUFC2 subunit family. Complex I is composed of 45 different subunits.

The protein localises to the mitochondrion inner membrane. Functionally, accessory subunit of the mitochondrial membrane respiratory chain NADH dehydrogenase (Complex I), that is believed not to be involved in catalysis. Complex I functions in the transfer of electrons from NADH to the respiratory chain. The immediate electron acceptor for the enzyme is believed to be ubiquinone. The polypeptide is NADH dehydrogenase [ubiquinone] 1 subunit C2, isoform 2 (NDUFC2-KCTD14) (Homo sapiens (Human)).